Reading from the N-terminus, the 505-residue chain is ATP synthase subunit alpha (505 aa).

A disordered region spans residues 118 to 138 (VDGLGPINTTNTRPIESPAPG). Position 172–179 (172–179 (GDRQTGKT)) interacts with ATP.

Belongs to the ATPase alpha/beta chains family. As to quaternary structure, F-type ATPases have 2 components, CF(1) - the catalytic core - and CF(0) - the membrane proton channel. CF(1) has five subunits: alpha(3), beta(3), gamma(1), delta(1), epsilon(1). CF(0) has three main subunits: a(1), b(2) and c(9-12). The alpha and beta chains form an alternating ring which encloses part of the gamma chain. CF(1) is attached to CF(0) by a central stalk formed by the gamma and epsilon chains, while a peripheral stalk is formed by the delta and b chains.

It localises to the cell membrane. The catalysed reaction is ATP + H2O + 4 H(+)(in) = ADP + phosphate + 5 H(+)(out). Produces ATP from ADP in the presence of a proton gradient across the membrane. The alpha chain is a regulatory subunit. The polypeptide is ATP synthase subunit alpha (Bacillus cereus (strain ATCC 14579 / DSM 31 / CCUG 7414 / JCM 2152 / NBRC 15305 / NCIMB 9373 / NCTC 2599 / NRRL B-3711)).